The following is a 94-amino-acid chain: MPKEDIHPTWYPDAKVICNGEVVMTTGSTQPEIHVDVWSGNHPFFTGTQKILDTEGRVDRFMRKYGMADSENDSTDKKKTTNEKKVSDSPSKES.

Residues 65–94 (YGMADSENDSTDKKKTTNEKKVSDSPSKES) are disordered. The segment covering 74-94 (STDKKKTTNEKKVSDSPSKES) has biased composition (basic and acidic residues).

Belongs to the bacterial ribosomal protein bL31 family. Type A subfamily. Part of the 50S ribosomal subunit.

Functionally, binds the 23S rRNA. This chain is Large ribosomal subunit protein bL31, found in Prochlorococcus marinus (strain MIT 9211).